A 393-amino-acid chain; its full sequence is NAD(P)H-quinone oxidoreductase subunit H, chloroplastic (393 aa).

Belongs to the complex I 49 kDa subunit family. NDH is composed of at least 16 different subunits, 5 of which are encoded in the nucleus.

It is found in the plastid. The protein localises to the chloroplast thylakoid membrane. The enzyme catalyses a plastoquinone + NADH + (n+1) H(+)(in) = a plastoquinol + NAD(+) + n H(+)(out). The catalysed reaction is a plastoquinone + NADPH + (n+1) H(+)(in) = a plastoquinol + NADP(+) + n H(+)(out). Its function is as follows. NDH shuttles electrons from NAD(P)H:plastoquinone, via FMN and iron-sulfur (Fe-S) centers, to quinones in the photosynthetic chain and possibly in a chloroplast respiratory chain. The immediate electron acceptor for the enzyme in this species is believed to be plastoquinone. Couples the redox reaction to proton translocation, and thus conserves the redox energy in a proton gradient. In Pelargonium hortorum (Common geranium), this protein is NAD(P)H-quinone oxidoreductase subunit H, chloroplastic.